We begin with the raw amino-acid sequence, 183 residues long: Ribose 1,5-bisphosphate phosphokinase PhnN (183 aa).

6 to 13 is a binding site for ATP; the sequence is GPSGAGKD.

It belongs to the ribose 1,5-bisphosphokinase family.

The enzyme catalyses alpha-D-ribose 1,5-bisphosphate + ATP = 5-phospho-alpha-D-ribose 1-diphosphate + ADP. Its pathway is metabolic intermediate biosynthesis; 5-phospho-alpha-D-ribose 1-diphosphate biosynthesis; 5-phospho-alpha-D-ribose 1-diphosphate from D-ribose 5-phosphate (route II): step 3/3. Functionally, catalyzes the phosphorylation of ribose 1,5-bisphosphate to 5-phospho-D-ribosyl alpha-1-diphosphate (PRPP). The protein is Ribose 1,5-bisphosphate phosphokinase PhnN of Agrobacterium fabrum (strain C58 / ATCC 33970) (Agrobacterium tumefaciens (strain C58)).